Consider the following 1070-residue polypeptide: Probable arabinosyltransferase C (1070 aa).

12 consecutive transmembrane segments (helical) span residues 10-32 (IARL…TPFL), 210-232 (LLKT…ALHL), 247-269 (SRWW…WHFV), 399-421 (VATS…LFSG), 425-442 (IASI…LTIL), 449-471 (FGAV…LIFR), 512-534 (SVAR…AMSL), 547-564 (SRRI…MMFT), 574-596 (VFAG…AALR), 603-625 (VFAA…WWYV), 645-664 (TALL…FHFV), and 685-707 (SPIA…MAMI).

The protein belongs to the emb family.

The protein localises to the cell membrane. Arabinosyl transferase responsible for the polymerization of arabinose into the arabinan of arabinogalactan. In Mycobacterium leprae (strain TN), this protein is Probable arabinosyltransferase C (embC).